A 386-amino-acid chain; its full sequence is Phosphomevalonate dehydratase large subunit (386 aa).

Positions 48, 49, 50, 53, 63, 79, and 80 each coordinate (R)-5-phosphomevalonate. Cys-110 provides a ligand contact to [4Fe-4S] cluster. (R)-5-phosphomevalonate contacts are provided by Glu-129 and Ser-130. Residues Cys-283 and Cys-342 each contribute to the [4Fe-4S] cluster site. Residue Lys-361 coordinates (R)-5-phosphomevalonate.

This sequence belongs to the AcnX type II large subunit family. Heterodimer composed of a large subunit (PMDh-L) and a small subunit (PMDh-S). The cofactor is [4Fe-4S] cluster.

It catalyses the reaction (R)-5-phosphomevalonate = (2E)-3-methyl-5-phosphooxypent-2-enoate + H2O. The protein operates within isoprenoid biosynthesis; isopentenyl diphosphate biosynthesis via mevalonate pathway. In terms of biological role, component of a hydro-lyase that catalyzes the dehydration of mevalonate 5-phosphate (MVA5P) to form trans-anhydromevalonate 5-phosphate (tAHMP). Involved in the archaeal mevalonate (MVA) pathway, which provides fundamental precursors for isoprenoid biosynthesis, such as isopentenyl diphosphate (IPP) and dimethylallyl diphosphate (DMAPP). The chain is Phosphomevalonate dehydratase large subunit from Thermococcus kodakarensis (strain ATCC BAA-918 / JCM 12380 / KOD1) (Pyrococcus kodakaraensis (strain KOD1)).